The sequence spans 616 residues: Dihydroxy-acid dehydratase 1 (616 aa).

Asp-81 is a Mg(2+) binding site. Cys-122 is a binding site for [2Fe-2S] cluster. Mg(2+)-binding residues include Asp-123 and Lys-124. An N6-carboxylysine modification is found at Lys-124. Cys-195 is a [2Fe-2S] cluster binding site. Glu-491 contributes to the Mg(2+) binding site. Ser-517 (proton acceptor) is an active-site residue.

It belongs to the IlvD/Edd family. In terms of assembly, homodimer. It depends on [2Fe-2S] cluster as a cofactor. Mg(2+) serves as cofactor.

It carries out the reaction (2R)-2,3-dihydroxy-3-methylbutanoate = 3-methyl-2-oxobutanoate + H2O. The enzyme catalyses (2R,3R)-2,3-dihydroxy-3-methylpentanoate = (S)-3-methyl-2-oxopentanoate + H2O. Its pathway is amino-acid biosynthesis; L-isoleucine biosynthesis; L-isoleucine from 2-oxobutanoate: step 3/4. It participates in amino-acid biosynthesis; L-valine biosynthesis; L-valine from pyruvate: step 3/4. Functions in the biosynthesis of branched-chain amino acids. Catalyzes the dehydration of (2R,3R)-2,3-dihydroxy-3-methylpentanoate (2,3-dihydroxy-3-methylvalerate) into 2-oxo-3-methylpentanoate (2-oxo-3-methylvalerate) and of (2R)-2,3-dihydroxy-3-methylbutanoate (2,3-dihydroxyisovalerate) into 2-oxo-3-methylbutanoate (2-oxoisovalerate), the penultimate precursor to L-isoleucine and L-valine, respectively. This Bradyrhizobium diazoefficiens (strain JCM 10833 / BCRC 13528 / IAM 13628 / NBRC 14792 / USDA 110) protein is Dihydroxy-acid dehydratase 1.